The primary structure comprises 224 residues: uncharacterized protein (224 aa).

An N-terminal signal peptide occupies residues 1 to 19 (MLRHITFTVFITTSMNTLA).

The protein belongs to the periplasmic pilus chaperone family.

It localises to the periplasm. Functionally, could be required for the biogenesis of a putative fimbria. This is an uncharacterized protein from Escherichia coli (strain K12).